A 169-amino-acid chain; its full sequence is Ribosome maturation factor RimM (169 aa).

The PRC barrel domain maps to 93 to 166 (GEHEFYYHEI…RIQITPLPGL (74 aa)).

The protein belongs to the RimM family. In terms of assembly, binds ribosomal protein uS19.

The protein resides in the cytoplasm. In terms of biological role, an accessory protein needed during the final step in the assembly of 30S ribosomal subunit, possibly for assembly of the head region. Essential for efficient processing of 16S rRNA. May be needed both before and after RbfA during the maturation of 16S rRNA. It has affinity for free ribosomal 30S subunits but not for 70S ribosomes. This chain is Ribosome maturation factor RimM, found in Exiguobacterium sibiricum (strain DSM 17290 / CCUG 55495 / CIP 109462 / JCM 13490 / 255-15).